The chain runs to 843 residues: Translation initiation factor IF-2 (843 aa).

2 disordered regions span residues 50–72 (LKSSHKSKAEEPRKITLQRKTTS) and 94–260 (QRSP…TGPV). A compositionally biased stretch (basic and acidic residues) spans 96–135 (SPEEIQAEQKREQDERRAAENAARDKVDADVRQRNEEQAR). A compositionally biased stretch (low complexity) spans 139 to 173 (TATAAAAPAAKAEPAPAAAAPAPAPVVADAPASED). Composition is skewed to basic and acidic residues over residues 174–203 (AAARAAERKKDETRRNESRTRDDDRRRGEA) and 227–236 (TTDEESDGAR). Basic residues predominate over residues 237-250 (RGRGGKGKLKKRNQ). One can recognise a tr-type G domain in the interval 343-516 (SRAPVVTVMG…EVLELTATPT (174 aa)). Positions 352–359 (GHVDHGKT) are G1. 352–359 (GHVDHGKT) provides a ligand contact to GTP. The interval 377–381 (GITQH) is G2. Residues 398–401 (DTPG) form a G3 region. GTP contacts are provided by residues 398–402 (DTPGH) and 452–455 (NKID). Positions 452–455 (NKID) are G4. Residues 488–490 (SAK) form a G5 region.

It belongs to the TRAFAC class translation factor GTPase superfamily. Classic translation factor GTPase family. IF-2 subfamily.

The protein resides in the cytoplasm. In terms of biological role, one of the essential components for the initiation of protein synthesis. Protects formylmethionyl-tRNA from spontaneous hydrolysis and promotes its binding to the 30S ribosomal subunits. Also involved in the hydrolysis of GTP during the formation of the 70S ribosomal complex. The sequence is that of Translation initiation factor IF-2 from Pseudomonas putida (strain W619).